The primary structure comprises 418 residues: MINFDGIKKITERLKWKQGDEDENWAKKAIDNLMKKLIKHNKQALENLEFALRCQGQQKTECVTIPRSLDGRLQISHRKALPHVIYCRVYRWPDLQSHHELKAIEDCRFCYESGQKDICINPYHYKRVHATGVLPPVLVPRYSEKPPQEVPPTLAKFQLMEMSGSRMPQNVNMANVNFTANQFHQYNPNGIEEMDTSQKFDIPPGVPTCLVPFDKVWEEQFWATVSYYELNTRVGEQVKVSSTTITIDGFTDPCINGSKISLGLFSNVNRNATIENTRRHIGNGVKLTYVRSNGSLFAQCESDSAIFVQSSNCNYINGFHSTTVVKIANKCSLKIFDMEIFRQLLEDCSRRGFDASFDLQKMTFIRMSFVKGWGAEYQRQDVTSTPCWIEIHLHAPLAWLDRVLSTMGPTPRPISSIS.

The MH1 domain occupies Lys8–Leu134. The Zn(2+) site is built by Cys62, Cys107, Cys119, and His124. One can recognise an MH2 domain in the interval Trp222 to Ser418.

The protein belongs to the dwarfin/SMAD family.

The protein resides in the cytoplasm. It is found in the nucleus. In terms of biological role, involved in TGF-beta pathway. Plays a role in male tail tip morphogenesis. In Caenorhabditis elegans, this protein is Dwarfin sma-2.